Reading from the N-terminus, the 418-residue chain is Serine--tRNA ligase (418 aa).

Residue 232 to 234 coordinates L-serine; sequence TAE. ATP is bound by residues 263-265 and Val279; that span reads RRE. An L-serine-binding site is contributed by Glu286. Residue 350–353 coordinates ATP; sequence EISS. Ser385 lines the L-serine pocket.

This sequence belongs to the class-II aminoacyl-tRNA synthetase family. Type-1 seryl-tRNA synthetase subfamily. In terms of assembly, homodimer. The tRNA molecule binds across the dimer.

Its subcellular location is the cytoplasm. It catalyses the reaction tRNA(Ser) + L-serine + ATP = L-seryl-tRNA(Ser) + AMP + diphosphate + H(+). It carries out the reaction tRNA(Sec) + L-serine + ATP = L-seryl-tRNA(Sec) + AMP + diphosphate + H(+). Its pathway is aminoacyl-tRNA biosynthesis; selenocysteinyl-tRNA(Sec) biosynthesis; L-seryl-tRNA(Sec) from L-serine and tRNA(Sec): step 1/1. Catalyzes the attachment of serine to tRNA(Ser). Is also able to aminoacylate tRNA(Sec) with serine, to form the misacylated tRNA L-seryl-tRNA(Sec), which will be further converted into selenocysteinyl-tRNA(Sec). This Leptospira biflexa serovar Patoc (strain Patoc 1 / Ames) protein is Serine--tRNA ligase.